Consider the following 583-residue polypeptide: Probable GTP diphosphokinase CRSH, chloroplastic (583 aa).

The transit peptide at 1–58 (MSVIRPSPIPIPRCRSQVLHRRLYSIQLIQRRRRRWNPRSEVEDTAIESTARSPEAAG) directs the protein to the chloroplast. One can recognise an HD domain in the interval 112 to 212 (PLSKALSLSI…MDLVSKLDEM (101 aa)). EF-hand domains lie at 470–505 (TTTN…LGAP) and 507–539 (EDAE…VEFM). Residues D483, N485, D487, M489, E494, D517, N519, D521, S523, and E528 each coordinate Ca(2+).

Belongs to the RelA/SpoT family. Expressed in shoots, cotyledons, rosette and cauline leaves, stems, sepals, pistils and siliques.

Its subcellular location is the plastid. It is found in the chloroplast. It carries out the reaction GTP + ATP = guanosine 3'-diphosphate 5'-triphosphate + AMP. Its activity is regulated as follows. Activated by calcium. Possesses calcium-dependent ppGpp (guanosine 3'-diphosphate 5'-diphosphate) synthetase activity in vitro and is able to functionally complement E.coli relA mutants. Plays an important role in the timing adjustment of pistil and pollen maturation required for successful pollination. May be involved in a rapid plant ppGpp-mediated response to pathogens and other stresses. This chain is Probable GTP diphosphokinase CRSH, chloroplastic (CRSH), found in Arabidopsis thaliana (Mouse-ear cress).